The primary structure comprises 372 residues: Putative glutamate--cysteine ligase 2 (372 aa).

The protein belongs to the glutamate--cysteine ligase type 2 family. YbdK subfamily.

It carries out the reaction L-cysteine + L-glutamate + ATP = gamma-L-glutamyl-L-cysteine + ADP + phosphate + H(+). In terms of biological role, ATP-dependent carboxylate-amine ligase which exhibits weak glutamate--cysteine ligase activity. This is Putative glutamate--cysteine ligase 2 from Gloeobacter violaceus (strain ATCC 29082 / PCC 7421).